The following is a 947-amino-acid chain: Bifunctional glutamine synthetase adenylyltransferase/adenylyl-removing enzyme (947 aa).

The tract at residues 1–440 (MTPLSSPLSQ…VFNELIGDDE (440 aa)) is adenylyl removase. Residues 450–947 (SEPWREVWQD…ASWRKWLVAV (498 aa)) are adenylyl transferase.

Belongs to the GlnE family. Requires Mg(2+) as cofactor.

It carries out the reaction [glutamine synthetase]-O(4)-(5'-adenylyl)-L-tyrosine + phosphate = [glutamine synthetase]-L-tyrosine + ADP. The catalysed reaction is [glutamine synthetase]-L-tyrosine + ATP = [glutamine synthetase]-O(4)-(5'-adenylyl)-L-tyrosine + diphosphate. Its function is as follows. Involved in the regulation of glutamine synthetase GlnA, a key enzyme in the process to assimilate ammonia. When cellular nitrogen levels are high, the C-terminal adenylyl transferase (AT) inactivates GlnA by covalent transfer of an adenylyl group from ATP to specific tyrosine residue of GlnA, thus reducing its activity. Conversely, when nitrogen levels are low, the N-terminal adenylyl removase (AR) activates GlnA by removing the adenylyl group by phosphorolysis, increasing its activity. The regulatory region of GlnE binds the signal transduction protein PII (GlnB) which indicates the nitrogen status of the cell. This Salmonella agona (strain SL483) protein is Bifunctional glutamine synthetase adenylyltransferase/adenylyl-removing enzyme.